Reading from the N-terminus, the 361-residue chain is Chorismate synthase (361 aa).

Residues arginine 48 and arginine 54 each coordinate NADP(+). FMN-binding positions include arginine 125–serine 127, asparagine 238–alanine 239, glycine 278, lysine 293–serine 297, and arginine 319.

It belongs to the chorismate synthase family. As to quaternary structure, homotetramer. Requires FMNH2 as cofactor.

The enzyme catalyses 5-O-(1-carboxyvinyl)-3-phosphoshikimate = chorismate + phosphate. It participates in metabolic intermediate biosynthesis; chorismate biosynthesis; chorismate from D-erythrose 4-phosphate and phosphoenolpyruvate: step 7/7. Its function is as follows. Catalyzes the anti-1,4-elimination of the C-3 phosphate and the C-6 proR hydrogen from 5-enolpyruvylshikimate-3-phosphate (EPSP) to yield chorismate, which is the branch point compound that serves as the starting substrate for the three terminal pathways of aromatic amino acid biosynthesis. This reaction introduces a second double bond into the aromatic ring system. The protein is Chorismate synthase of Klebsiella pneumoniae subsp. pneumoniae (strain ATCC 700721 / MGH 78578).